The primary structure comprises 320 residues: ATP-dependent 6-phosphofructokinase (320 aa).

Glycine 11 is a binding site for ATP. Residue 21-25 (RAVTK) participates in ADP binding. Residues 72–73 (RF) and 102–105 (GDGS) each bind ATP. Aspartate 103 lines the Mg(2+) pocket. 125–127 (TID) serves as a coordination point for substrate. The Proton acceptor role is filled by aspartate 127. Arginine 154 contributes to the ADP binding site. Residues arginine 162 and 169–171 (MGR) contribute to the substrate site. ADP is bound by residues 185–187 (GAD) and 213–215 (KDH). Substrate-binding positions include glutamate 222, arginine 243, and 249 to 252 (HMQR).

The protein belongs to the phosphofructokinase type A (PFKA) family. ATP-dependent PFK group I subfamily. Prokaryotic clade 'B1' sub-subfamily. Homotetramer. It depends on Mg(2+) as a cofactor.

The protein resides in the cytoplasm. The catalysed reaction is beta-D-fructose 6-phosphate + ATP = beta-D-fructose 1,6-bisphosphate + ADP + H(+). It functions in the pathway carbohydrate degradation; glycolysis; D-glyceraldehyde 3-phosphate and glycerone phosphate from D-glucose: step 3/4. With respect to regulation, allosterically activated by ADP and other diphosphonucleosides, and allosterically inhibited by phosphoenolpyruvate. In terms of biological role, catalyzes the phosphorylation of D-fructose 6-phosphate to fructose 1,6-bisphosphate by ATP, the first committing step of glycolysis. In Lactobacillus acidophilus (strain ATCC 700396 / NCK56 / N2 / NCFM), this protein is ATP-dependent 6-phosphofructokinase.